A 363-amino-acid chain; its full sequence is NAD(P)H-quinone oxidoreductase subunit 1, chloroplastic (363 aa).

7 helical membrane passes run 30–50, 98–118, 129–149, 165–185, 253–273, 303–323, and 336–356; these read LVPI…IVWL, FSIG…VIPF, VGVF…LMSG, AAQS…ISLL, FAFF…FVTI, TTTE…ISIT, and LLNL…LLTT.

This sequence belongs to the complex I subunit 1 family. As to quaternary structure, NDH is composed of at least 16 different subunits, 5 of which are encoded in the nucleus.

The protein localises to the plastid. The protein resides in the chloroplast thylakoid membrane. It catalyses the reaction a plastoquinone + NADH + (n+1) H(+)(in) = a plastoquinol + NAD(+) + n H(+)(out). The enzyme catalyses a plastoquinone + NADPH + (n+1) H(+)(in) = a plastoquinol + NADP(+) + n H(+)(out). In terms of biological role, NDH shuttles electrons from NAD(P)H:plastoquinone, via FMN and iron-sulfur (Fe-S) centers, to quinones in the photosynthetic chain and possibly in a chloroplast respiratory chain. The immediate electron acceptor for the enzyme in this species is believed to be plastoquinone. Couples the redox reaction to proton translocation, and thus conserves the redox energy in a proton gradient. The polypeptide is NAD(P)H-quinone oxidoreductase subunit 1, chloroplastic (Pelargonium hortorum (Common geranium)).